A 166-amino-acid polypeptide reads, in one-letter code: Phosphopantetheine adenylyltransferase (166 aa).

A substrate-binding site is contributed by T10. Residues 10–11 and H18 contribute to the ATP site; that span reads TF. Positions 42, 74, and 88 each coordinate substrate. ATP-binding positions include 89–91, E99, and 124–130; these read GLR and NSFISSS.

Belongs to the bacterial CoaD family. As to quaternary structure, homohexamer. Mg(2+) serves as cofactor.

It is found in the cytoplasm. The catalysed reaction is (R)-4'-phosphopantetheine + ATP + H(+) = 3'-dephospho-CoA + diphosphate. Its pathway is cofactor biosynthesis; coenzyme A biosynthesis; CoA from (R)-pantothenate: step 4/5. Its function is as follows. Reversibly transfers an adenylyl group from ATP to 4'-phosphopantetheine, yielding dephospho-CoA (dPCoA) and pyrophosphate. This Idiomarina loihiensis (strain ATCC BAA-735 / DSM 15497 / L2-TR) protein is Phosphopantetheine adenylyltransferase.